A 471-amino-acid chain; its full sequence is MSRRVVRQSKFRHVFGQAAKADQAYEDIRVSKVTWDSAFCAVNPKFLAIIVEAGGGGAFIVLPLAKTGRVDKNYPLVTGHTGPVLDIDWCPHNDNVIASASDDTTVMVWQIPDYTPVRNITEPVITLEGHSKRVGILSWHPTARNVLLSAGGDNVIIIWNVGTGEVLLSLDDIHPDVIHSVCWNSNGSLLATTCKDKTLRIIDPRKSQVVAERARPHEGARPLRAVFTADGKLLSTGFSRMSERQLALWDPNNFEEPVALQEMDTSNGVLLPFYDPDSSIVYLCGKGDSSIRYFEITEEPPFVHYLNTFSSKEPQRGMGFMPKRGLDVSKCEIARFYKLHERKCEPIIMTVPRKSDLFQDDLYPDTPGPEPALEADEWLSGQDAEPVLISLKEGYVPPKHRELRVTKRNILDVRPPASPRRSQSASEAPLSQHTLETLLEEIKALRDRVQAQEERITALENMLCELVDGTD.

WD repeat units follow at residues 79–119, 129–169, 173–212, 216–259, and 264–304; these read GHTG…PVRN, GHSK…VLLS, IHPDVIHSVCWNSNGSLLATTCKDKTLRIIDPRKSQVVAE, PHEG…EPVA, and DTSN…PFVH. Residues 410 to 433 are disordered; sequence ILDVRPPASPRRSQSASEAPLSQH. Low complexity predominate over residues 419–429; the sequence is PRRSQSASEAP. Positions 426–468 form a coiled coil; sequence SEAPLSQHTLETLLEEIKALRDRVQAQEERITALENMLCELVD.

In Mus musculus (Mouse), this protein is Coronin-6 (Coro6).